The sequence spans 188 residues: Probable manganese efflux pump MntP (188 aa).

Helical transmembrane passes span 3-23 (YTAT…ASIG), 41-61 (LIFG…GILA), 66-86 (LEWN…RMII), 106-128 (WLLV…GLAF), 143-163 (ATLI…PMLG), and 168-188 (ILGG…HFHG).

This sequence belongs to the MntP (TC 9.B.29) family.

The protein resides in the cell inner membrane. Functionally, probably functions as a manganese efflux pump. This is Probable manganese efflux pump MntP from Salmonella heidelberg (strain SL476).